Here is a 411-residue protein sequence, read N- to C-terminus: Acetylornithine aminotransferase (411 aa).

Residues 107 to 108 and Phe-141 contribute to the pyridoxal 5'-phosphate site; that span reads GT. Arg-144 is a N(2)-acetyl-L-ornithine binding site. Pyridoxal 5'-phosphate is bound at residue 227-230; the sequence is DEIQ. Residue Lys-256 is modified to N6-(pyridoxal phosphate)lysine. Thr-284 contributes to the N(2)-acetyl-L-ornithine binding site. Thr-285 is a pyridoxal 5'-phosphate binding site.

This sequence belongs to the class-III pyridoxal-phosphate-dependent aminotransferase family. ArgD subfamily. As to quaternary structure, homodimer. The cofactor is pyridoxal 5'-phosphate.

Its subcellular location is the cytoplasm. It catalyses the reaction N(2)-acetyl-L-ornithine + 2-oxoglutarate = N-acetyl-L-glutamate 5-semialdehyde + L-glutamate. Its pathway is amino-acid biosynthesis; L-arginine biosynthesis; N(2)-acetyl-L-ornithine from L-glutamate: step 4/4. This chain is Acetylornithine aminotransferase, found in Xylella fastidiosa (strain Temecula1 / ATCC 700964).